Reading from the N-terminus, the 2778-residue chain is Probable ubiquitin carboxyl-terminal hydrolase FAF (2778 aa).

Residues 1–85 (MTFDTRRHTT…SQSSDDVAAS (85 aa)) are disordered. The segment covering 10-39 (TGQPGSTAPSSSSSTTSTTTTTTSPAQSAG) has biased composition (low complexity). Positions 71-85 (QPATDSQSSDDVAAS) are enriched in polar residues. At Ser-924 the chain carries Phosphoserine. The tract at residues 1065–1094 (GTGLASSPDSSSDSSTGSPPRPCPDMQRVE) is disordered. The segment covering 1070 to 1082 (SSPDSSSDSSTGS) has biased composition (low complexity). Positions 1668-2062 (CGLKNAGATC…NAYMLFYTRC (395 aa)) constitute a USP domain. Residue Cys-1677 is the Nucleophile of the active site. His-1986 (proton acceptor) is an active-site residue. Disordered stretches follow at residues 2568 to 2632 (VSEK…GDSN) and 2644 to 2691 (AYTS…INGL). Composition is skewed to low complexity over residues 2614 to 2627 (TPTTSSPSTAAWPA) and 2644 to 2671 (AYTSTGSGSTSGGSAPTSALTTTAGSGA). Positions 2672 to 2691 (NSETESSAQETTGETTINGL) are enriched in polar residues.

Belongs to the peptidase C19 family. Interacts with imd. In terms of processing, ubiquitinated. Ubiquitination is enhanced by the expression of imd. In terms of tissue distribution, eye disks and ovaries. Expressed in larval fat body.

It carries out the reaction Thiol-dependent hydrolysis of ester, thioester, amide, peptide and isopeptide bonds formed by the C-terminal Gly of ubiquitin (a 76-residue protein attached to proteins as an intracellular targeting signal).. Ubiquitin C-terminal hydrolase involved in development and the imd/NF-kappa-B (IMD) signaling cascade. Required for eye and embryo development, and plays a role in compound eye assembly and oogenesis respectively. In the larval eye disks, cells outside the assembling facets require this protein for short-range cell interactions that prevent the mystery cells from becoming photoreceptors. Also required for nuclear migration and cellularization in early embryogenesis and could play a role in pole cell determination, development or function. Regulates the IMD signaling cascade at later stages of infection (around 6 hours post-infection) by inhibiting the expression of the antimicrobial peptides Dpt and Dro. Acts by modulating the state of imd polyubiquitination and/or stability; a function which appears to be independent of its enzymatic activity. In turn, imd enhances the polyubiquitination and stability of faf suggesting that they may form a regulatory feedback mechanism within the Imd pathway. This is Probable ubiquitin carboxyl-terminal hydrolase FAF (faf) from Drosophila melanogaster (Fruit fly).